The sequence spans 266 residues: MRLIPLTTAADVGKWAARHIVEKINAFKPSAERPFILGLPTGTSPLEAYKSLVTMHKAGLVSFKHVVTFNMDEYVGLPTDHPESYHTFMHQNFFNHIDILRENINLLNGNAADTTAECRRYEEKIKSYGKIHLFMGGVGNDGHIAFNEPASSLASRTRIKTLTEETRIANSRFFGGDVSLVPKFALTVGVGTLLDAEEVMILVTGRNKAQALQAAVEGNVNHMWTISCLQLHAKAIMVCDEPSTMELKVKTVKYFRELETESMKNL.

Asp72 acts as the Proton acceptor; for enolization step in catalysis. The For ring-opening step role is filled by Asp141. Residue His143 is the Proton acceptor; for ring-opening step of the active site. Residue Glu148 is the For ring-opening step of the active site.

The protein belongs to the glucosamine/galactosamine-6-phosphate isomerase family. NagB subfamily. As to quaternary structure, homohexamer.

The catalysed reaction is alpha-D-glucosamine 6-phosphate + H2O = beta-D-fructose 6-phosphate + NH4(+). Its pathway is amino-sugar metabolism; N-acetylneuraminate degradation; D-fructose 6-phosphate from N-acetylneuraminate: step 5/5. Its activity is regulated as follows. Allosterically activated by N-acetylglucosamine 6-phosphate (GlcNAc6P). Its function is as follows. Catalyzes the reversible isomerization-deamination of glucosamine 6-phosphate (GlcN6P) to form fructose 6-phosphate (Fru6P) and ammonium ion. This chain is Glucosamine-6-phosphate deaminase, found in Pectobacterium atrosepticum (strain SCRI 1043 / ATCC BAA-672) (Erwinia carotovora subsp. atroseptica).